A 323-amino-acid chain; its full sequence is Cell division protein ZipA (323 aa).

The Periplasmic portion of the chain corresponds to Met1–Arg5. A helical transmembrane segment spans residues Phe6–Thr26. Residues Ser27–Ala323 lie on the Cytoplasmic side of the membrane. Residues Phe35–Asp92 are disordered. Basic and acidic residues-rich tracts occupy residues Gly41 to Ala60 and Glu68 to Asp78.

This sequence belongs to the ZipA family. In terms of assembly, interacts with FtsZ via their C-terminal domains.

It is found in the cell inner membrane. In terms of biological role, essential cell division protein that stabilizes the FtsZ protofilaments by cross-linking them and that serves as a cytoplasmic membrane anchor for the Z ring. Also required for the recruitment to the septal ring of downstream cell division proteins. The protein is Cell division protein ZipA of Vibrio campbellii (strain ATCC BAA-1116).